The primary structure comprises 268 residues: Indole-3-glycerol phosphate synthase (268 aa).

This sequence belongs to the TrpC family.

It catalyses the reaction 1-(2-carboxyphenylamino)-1-deoxy-D-ribulose 5-phosphate + H(+) = (1S,2R)-1-C-(indol-3-yl)glycerol 3-phosphate + CO2 + H2O. It functions in the pathway amino-acid biosynthesis; L-tryptophan biosynthesis; L-tryptophan from chorismate: step 4/5. The sequence is that of Indole-3-glycerol phosphate synthase from Acinetobacter baumannii (strain AB0057).